Consider the following 252-residue polypeptide: Cyclic di-GMP binding protein VCA0042 (252 aa).

Over residues 1 to 11 (MNSRPAEKIDN) the composition is skewed to basic and acidic residues. Residues 1–24 (MNSRPAEKIDNNDGQTETPRSKTV) form a disordered region. The span at 12–24 (NDGQTETPRSKTV) shows a compositional bias: polar residues. Positions 134 to 233 (QLRKEPRFEL…EEGRNNAKNL (100 aa)) constitute a PilZ domain.

This sequence belongs to the YcgR family. Dimer.

It is found in the bacterial flagellum basal body. Functionally, may act as a flagellar brake, regulating swimming and swarming in a bis-(3'-5') cyclic diguanylic acid (c-di-GMP)-dependent manner. Increasing levels of c-di-GMP lead to decreased motility (Potential). Binds bis-(3'-5') cyclic diguanylic acid (c-di-GMP) with a dissociation constant of 170 nM in the presence of 10 mM KCl and with 100 nM in its absence. Binds 1 to 2 c-di-GMP per subunit. Only 1 c-di-GMP is seen in the wild-type crystal, while 2 are seen in the mutant. Depending on the concentration of K(+) stoichiometries of 1:1, 1.43:1 and 2:1 are determined by isothermal titration calorimetry. The polypeptide is Cyclic di-GMP binding protein VCA0042 (Vibrio cholerae serotype O1 (strain ATCC 39315 / El Tor Inaba N16961)).